Consider the following 87-residue polypeptide: uncharacterized protein (87 aa).

The first 22 residues, 1 to 22, serve as a signal peptide directing secretion; sequence MKIKTTVAALSVLSVLSFGAFA.

It belongs to the BhsA/McbA family.

Its subcellular location is the periplasm. This is an uncharacterized protein from Escherichia coli O6:H1 (strain CFT073 / ATCC 700928 / UPEC).